Consider the following 1136-residue polypeptide: Mitochondrial 3' processome subunit 3 (1136 aa).

The transit peptide at 1 to 97 (MKKAWAQLER…RGLVCTTVGD (97 aa)) directs the protein to the mitochondrion.

Component of the mitochondrial 3' processome (MPsome) complex composed at least of terminal uridylyltransferase KRET1/TUT1, 3'-5' exonuclease DSS1, MPSS1, MPSS2 and MPSS3. Within the complex, interacts with KRET1.

It is found in the mitochondrion. As part of the mitochondrial 3' processome (MPsome), involved in the maturation of guided RNA (gRNA) precursors. This chain is Mitochondrial 3' processome subunit 3, found in Trypanosoma brucei brucei.